A 230-amino-acid polypeptide reads, in one-letter code: uncharacterized protein (230 aa).

This is an uncharacterized protein from Dictyostelium discoideum (Social amoeba).